We begin with the raw amino-acid sequence, 186 residues long: ATP synthase subunit delta (186 aa).

It belongs to the ATPase delta chain family. F-type ATPases have 2 components, F(1) - the catalytic core - and F(0) - the membrane proton channel. F(1) has five subunits: alpha(3), beta(3), gamma(1), delta(1), epsilon(1). CF(0) has four main subunits: a(1), b(1), b'(1) and c(10-14). The alpha and beta chains form an alternating ring which encloses part of the gamma chain. F(1) is attached to F(0) by a central stalk formed by the gamma and epsilon chains, while a peripheral stalk is formed by the delta, b and b' chains.

The protein resides in the cell inner membrane. Its function is as follows. F(1)F(0) ATP synthase produces ATP from ADP in the presence of a proton or sodium gradient. F-type ATPases consist of two structural domains, F(1) containing the extramembraneous catalytic core and F(0) containing the membrane proton channel, linked together by a central stalk and a peripheral stalk. During catalysis, ATP synthesis in the catalytic domain of F(1) is coupled via a rotary mechanism of the central stalk subunits to proton translocation. This protein is part of the stalk that links CF(0) to CF(1). It either transmits conformational changes from CF(0) to CF(1) or is implicated in proton conduction. This chain is ATP synthase subunit delta, found in Cereibacter sphaeroides (strain ATCC 17025 / ATH 2.4.3) (Rhodobacter sphaeroides).